The following is a 495-amino-acid chain: Cytochrome P450 monooxygenase BOA4 (495 aa).

The helical transmembrane segment at 12 to 31 (LANSNTVIAGCIVFALYYLF) threads the bilayer. N-linked (GlcNAc...) asparagine glycosylation is present at asparagine 115. Cysteine 439 lines the heme pocket.

This sequence belongs to the cytochrome P450 family. Heme serves as cofactor.

It is found in the membrane. The protein operates within polyketide biosynthesis. Its function is as follows. Cytochrome P450 monooxygenase; part of the gene cluster A that mediates the biosynthesis of botcinic acid and its botcinin derivatives, acetate-derived polyketides that contribute to virulence when combined with the sesquiterpene botrydial. Botcinic acid and its derivatives have been shown to induce chlorosis and necrosis during host plant infection, but also have antifungal activities. Two polyketide synthases, BOA6 and BOA9, are involved in the biosynthesis of botcinins. BOA6 mediates the formation of the per-methylated tetraketide core by condensation of four units of malonyl-CoA with one unit of acetyl-CoA, which would be methylated in activated methylene groups to yield a bicyclic acid intermediate that could then either be converted to botrylactone derivatives or lose the starter acetate unit through a retro-Claisen type C-C bond cleavage to yield botcinin derivatives. The second polyketide synthase, BOA9, is probably required for the biosynthesis of the tetraketide side chain of botcinins. The methyltransferase (MT) domain within BOA6 is probably responsible for the incorporation of four methyl groups. The trans-enoyl reductase BOA5 might take over the enoyl reductase function of BOA6 that misses an ER domain. The monooxygenases BOA2, BOA3 and BOA4 might be involved in further hydroxylations at C4, C5 and C8, whereas BOA7, close to BOA9, could potentially be involved in the hydroxylation at C4 in the side chain of botcinins. The polypeptide is Cytochrome P450 monooxygenase BOA4 (Botryotinia fuckeliana (strain B05.10) (Noble rot fungus)).